Reading from the N-terminus, the 152-residue chain is Large ribosomal subunit protein uL13 (152 aa).

The protein belongs to the universal ribosomal protein uL13 family. In terms of assembly, part of the 50S ribosomal subunit.

This protein is one of the early assembly proteins of the 50S ribosomal subunit, although it is not seen to bind rRNA by itself. It is important during the early stages of 50S assembly. In Neorickettsia sennetsu (strain ATCC VR-367 / Miyayama) (Ehrlichia sennetsu), this protein is Large ribosomal subunit protein uL13.